The primary structure comprises 157 residues: Small ribosomal subunit protein uS17 (157 aa).

This sequence belongs to the universal ribosomal protein uS17 family.

In Dunaliella tertiolecta (Green alga), this protein is Small ribosomal subunit protein uS17 (RPS11).